The following is a 452-amino-acid chain: Regulator of nonsense transcripts 3A (452 aa).

2 stretches are compositionally biased toward basic and acidic residues: residues arginine 205 to lysine 363 and threonine 376 to proline 401. The segment at arginine 205 to glutamate 452 is disordered.

This sequence belongs to the RENT3 family.

Its subcellular location is the nucleus. The protein localises to the cytoplasm. Its function is as follows. Involved in nonsense-mediated decay (NMD) of mRNAs containing premature stop codons by associating with the nuclear exon junction complex (EJC) and serving as link between the EJC core and NMD machinery. Recruits UPF2 at the cytoplasmic side of the nuclear envelope and the subsequent formation of an UPF1-UPF2-UPF3 surveillance complex (including UPF1 bound to release factors at the stalled ribosome) is believed to activate NMD. Binds spliced mRNA upstream of exon-exon junctions. The polypeptide is Regulator of nonsense transcripts 3A (Danio rerio (Zebrafish)).